A 180-amino-acid polypeptide reads, in one-letter code: Translation initiation factor IF-3 (180 aa).

The protein belongs to the IF-3 family. In terms of assembly, monomer.

It localises to the cytoplasm. Functionally, IF-3 binds to the 30S ribosomal subunit and shifts the equilibrium between 70S ribosomes and their 50S and 30S subunits in favor of the free subunits, thus enhancing the availability of 30S subunits on which protein synthesis initiation begins. The sequence is that of Translation initiation factor IF-3 from Klebsiella pneumoniae.